The chain runs to 276 residues: Small ribosomal subunit protein uS3 (276 aa).

In terms of domain architecture, KH type-2 spans 38 to 106 (IRRMMTKGME…QVQLNILEVK (69 aa)). The span at 216–228 (NAAARAGNRPARG) shows a compositional bias: low complexity. Residues 216–276 (NAAARAGNRP…PAAESTGTEA (61 aa)) form a disordered region. The segment covering 229 to 245 (GADRPAGRGGRGGERGG) has biased composition (basic and acidic residues). Over residues 254-269 (PAAEAPKADAAAAPAA) the composition is skewed to low complexity.

Belongs to the universal ribosomal protein uS3 family. In terms of assembly, part of the 30S ribosomal subunit. Forms a tight complex with proteins S10 and S14.

Binds the lower part of the 30S subunit head. Binds mRNA in the 70S ribosome, positioning it for translation. This is Small ribosomal subunit protein uS3 from Streptomyces griseus subsp. griseus (strain JCM 4626 / CBS 651.72 / NBRC 13350 / KCC S-0626 / ISP 5235).